The sequence spans 163 residues: Aspartate 1-decarboxylase (163 aa).

S25 functions as the Schiff-base intermediate with substrate; via pyruvic acid in the catalytic mechanism. Pyruvic acid (Ser) is present on S25. T57 lines the substrate pocket. The active-site Proton donor is Y58. 73–75 (GAA) provides a ligand contact to substrate.

This sequence belongs to the PanD family. Heterooctamer of four alpha and four beta subunits. It depends on pyruvate as a cofactor. Post-translationally, is synthesized initially as an inactive proenzyme, which is activated by self-cleavage at a specific serine bond to produce a beta-subunit with a hydroxyl group at its C-terminus and an alpha-subunit with a pyruvoyl group at its N-terminus.

Its subcellular location is the cytoplasm. The enzyme catalyses L-aspartate + H(+) = beta-alanine + CO2. It functions in the pathway cofactor biosynthesis; (R)-pantothenate biosynthesis; beta-alanine from L-aspartate: step 1/1. In terms of biological role, catalyzes the pyruvoyl-dependent decarboxylation of aspartate to produce beta-alanine. This Saccharopolyspora erythraea (strain ATCC 11635 / DSM 40517 / JCM 4748 / NBRC 13426 / NCIMB 8594 / NRRL 2338) protein is Aspartate 1-decarboxylase.